The chain runs to 438 residues: Histidinol dehydrogenase (438 aa).

Tyr138, Gln199, and Asn222 together coordinate NAD(+). Residues Ser245, Gln267, and His270 each coordinate substrate. 2 residues coordinate Zn(2+): Gln267 and His270. Active-site proton acceptor residues include Glu335 and His336. The substrate site is built by His336, Asp369, Glu423, and His428. Asp369 contributes to the Zn(2+) binding site. Residue His428 participates in Zn(2+) binding.

The protein belongs to the histidinol dehydrogenase family. Zn(2+) is required as a cofactor.

The catalysed reaction is L-histidinol + 2 NAD(+) + H2O = L-histidine + 2 NADH + 3 H(+). It participates in amino-acid biosynthesis; L-histidine biosynthesis; L-histidine from 5-phospho-alpha-D-ribose 1-diphosphate: step 9/9. Catalyzes the sequential NAD-dependent oxidations of L-histidinol to L-histidinaldehyde and then to L-histidine. The chain is Histidinol dehydrogenase from Burkholderia lata (strain ATCC 17760 / DSM 23089 / LMG 22485 / NCIMB 9086 / R18194 / 383).